The sequence spans 349 residues: Flavonol synthase/flavanone 3-hydroxylase (349 aa).

Residues 213-310 (DIVYMLKINY…RMSWPVFLEP (98 aa)) enclose the Fe2OG dioxygenase domain. The Fe cation site is built by H238, D240, and H291.

This sequence belongs to the iron/ascorbate-dependent oxidoreductase family. Fe cation is required as a cofactor. The cofactor is L-ascorbate.

It is found in the cytoplasm. The enzyme catalyses a (2R,3R)-dihydroflavonol + 2-oxoglutarate + O2 = a flavonol + succinate + CO2 + H2O. The catalysed reaction is a (2S)-flavan-4-one + 2-oxoglutarate + O2 = a (2R,3R)-dihydroflavonol + succinate + CO2. Its pathway is secondary metabolite biosynthesis; flavonoid biosynthesis. Catalyzes the formation of flavonols from dihydroflavonols. It can act on dihydrokaempferol to produce kaempferol, on dihydroquercetin to produce quercitin and on dihydromyricetin to produce myricetin. This is Flavonol synthase/flavanone 3-hydroxylase from Solanum tuberosum (Potato).